The sequence spans 95 residues: Aspartyl/glutamyl-tRNA(Asn/Gln) amidotransferase subunit C (95 aa).

The protein belongs to the GatC family. As to quaternary structure, heterotrimer of A, B and C subunits.

The enzyme catalyses L-glutamyl-tRNA(Gln) + L-glutamine + ATP + H2O = L-glutaminyl-tRNA(Gln) + L-glutamate + ADP + phosphate + H(+). It carries out the reaction L-aspartyl-tRNA(Asn) + L-glutamine + ATP + H2O = L-asparaginyl-tRNA(Asn) + L-glutamate + ADP + phosphate + 2 H(+). Allows the formation of correctly charged Asn-tRNA(Asn) or Gln-tRNA(Gln) through the transamidation of misacylated Asp-tRNA(Asn) or Glu-tRNA(Gln) in organisms which lack either or both of asparaginyl-tRNA or glutaminyl-tRNA synthetases. The reaction takes place in the presence of glutamine and ATP through an activated phospho-Asp-tRNA(Asn) or phospho-Glu-tRNA(Gln). The sequence is that of Aspartyl/glutamyl-tRNA(Asn/Gln) amidotransferase subunit C from Desulforapulum autotrophicum (strain ATCC 43914 / DSM 3382 / VKM B-1955 / HRM2) (Desulfobacterium autotrophicum).